The sequence spans 138 residues: ATP synthase subunit g, mitochondrial (138 aa).

The protein belongs to the ATPase g subunit family. As to quaternary structure, F-type ATP synthases have 2 components, the catalytic core F(1) and the membrane-embedded component F(0), linked together by a central stalk and a peripheral stalk. The central stalk, also called rotor shaft, is often seen as part of F(1). The peripheral stalk is seen as part of F(0). F(0) contains the membrane channel next to the rotor. F-type ATP synthases form dimers but each monomer functions independently in ATP generation. The dimer consists of 17 different polypeptides: ATP1 (subunit alpha, 3 molecules per monomer, part of F(1)), ATP2 (subunit beta, 3 copies per monomer, part of F(1)), ATP3 (subunit gamma, part of the central stalk), ATP4 (subunit b, part of the peripheral stalk), ATP5/OSCP (subunit 5/OSCP, part of the peripheral stalk), ATP6 (subunit a, part of the peripheral stalk), ATP7 (subunit d, part of the peripheral stalk), ATP8 (subunit 8, part of the peripheral stalk), OLI1 (subunit c, part of the rotor, 10 molecules per monomer), ATP14 (subunit h, part of the peripheral stalk), ATP15 (subunit epsilon, part of the central stalk), ATP16 (subunit delta, part of the central stalk), ATP17 (subunit f, part of the peripheral stalk), ATP18 (subunit i/j, part of the peripheral stalk), ATP19 (subunit k, dimer-specific, at interface between monomers), ATP20 (subunit g, at interface between monomers), TIM11 (subunit e, at interface between monomers).

The protein resides in the mitochondrion inner membrane. In terms of biological role, mitochondrial membrane ATP synthase (F(1)F(0) ATP synthase or Complex V) produces ATP from ADP in the presence of a proton gradient across the membrane which is generated by electron transport complexes of the respiratory chain. F-type ATP synthases consist of two structural domains, F(1) - containing the extramembraneous catalytic core, and F(0) - containing the membrane proton channel, linked together by a central stalk and a peripheral stalk. During catalysis, ATP synthesis in the catalytic domain of F(1) is coupled via a rotary mechanism of the central stalk subunits to proton translocation. Part of the complex F(0) domain. Minor subunit located with subunit a/ATP6 in the membrane. Together with subunit e/TIM11, probably contributes to membrane curvature at the site of the ATP synthase dimer, ultimately contributing to formation of cristae. The polypeptide is ATP synthase subunit g, mitochondrial (Yarrowia lipolytica (strain CLIB 122 / E 150) (Yeast)).